The following is a 237-amino-acid chain: Ras modification protein ERF4 (237 aa).

It belongs to the ERF4 family. Interacts with ERF2.

The protein resides in the endoplasmic reticulum membrane. Functionally, the ERF2-SHR5 complex is a palmitoyltransferase specific for Ras proteins. Palmitoylates RAS2, which is required for its proper plasma membrane localization. The chain is Ras modification protein ERF4 (SHR5) from Saccharomyces cerevisiae (strain ATCC 204508 / S288c) (Baker's yeast).